The chain runs to 889 residues: Protein SEY1 homolog (889 aa).

Residues 1 to 801 (MDTKTQIIDY…ETGAKMSLKN (801 aa)) lie on the Cytoplasmic side of the membrane. Positions 31–277 (GFNYNVIAIL…IPSDGFAHYC (247 aa)) constitute a GB1/RHD3-type G domain. Residue 41 to 48 (GSQSSGKS) coordinates GTP. The disordered stretch occupies residues 429 to 449 (RKDGKGGSSPSAGDKKDTKDT). The stretch at 679-699 (LDEIMDVLKSKLDEISDNLSS) forms a coiled coil. Residues 802–822 (VPLFFWVILLILGWNELLFFT) form a helical membrane-spanning segment. Topologically, residues 823–825 (RFF) are lumenal. The helical transmembrane segment at 826–846 (FRLNIILPLFLAAAVILSTLV) threads the bilayer. The Cytoplasmic segment spans residues 847-889 (FNGNMEVLSIINKAVFFLAKNSFGVYRQLQAMGGKAAQGAAAD).

Belongs to the TRAFAC class dynamin-like GTPase superfamily. GB1/RHD3 GTPase family. RHD3 subfamily.

The protein localises to the endoplasmic reticulum membrane. Probable GTP-binding protein involved in generating and maintaining the structure of the tubular endoplasmic reticulum network. The chain is Protein SEY1 homolog from Plasmodium vivax (strain Salvador I).